The following is a 124-amino-acid chain: MTKTKQEIYNKRPTSPHLTIYKPQISSTLSILYRMTGVALFFAVSILVWWLILSKYDNNYLQLAECCIIKICLVAVSYAWFYHLCNGIRHLFWDIGYGFSIKLVNITGWCVVVGSVLLTVLLWV.

The Cytoplasmic portion of the chain corresponds to 1 to 29 (MTKTKQEIYNKRPTSPHLTIYKPQISSTL). Residues 30–55 (SILYRMTGVALFFAVSILVWWLILSK) form a helical membrane-spanning segment. At 56–67 (YDNNYLQLAECC) the chain is on the periplasmic side. The helical transmembrane segment at 68-88 (IIKICLVAVSYAWFYHLCNGI) threads the bilayer. Position 83 (His-83) interacts with heme. Residues 89-103 (RHLFWDIGYGFSIKL) are Cytoplasmic-facing. The helical transmembrane segment at 104–124 (VNITGWCVVVGSVLLTVLLWV) threads the bilayer.

The protein belongs to the cytochrome b560 family. Part of an enzyme complex containing four subunits: a flavoprotein, an iron-sulfur protein, plus two membrane-anchoring proteins, SdhC and SdhD. The complex can form homotrimers. Requires heme as cofactor.

The protein resides in the cell inner membrane. It participates in carbohydrate metabolism; tricarboxylic acid cycle. In terms of biological role, membrane-anchoring subunit of succinate dehydrogenase (SDH). In Rickettsia conorii (strain ATCC VR-613 / Malish 7), this protein is Succinate dehydrogenase cytochrome b556 subunit (sdhC).